We begin with the raw amino-acid sequence, 348 residues long: MTVRIAINGFGRIGRNVVRALYESGRRAEITVVAINELADAAGMAHLLKYDTSHGRFAWEVRHEREQLFVGDDVIRILHERTLADLPWRELGVDVVLDCTGVYGNQEHGEAHIAAGAKKVLFSHPGSNDLDATVVFGVNQNQLRAEHRIVSNASCTTNCIIPVIKLLDDAYGIESGTVTAIHSAMNDQQVIDAYHSDLRRTRAASQSIIPVDTKLAAGITRIFPQFNDRFEAIAVRVPTINVTAIDLSVTVKKPVKASEVNQLLQKAAQGAFHGIVDYTESPLVSIDFNHDPHSAIVDGTQTRVSGAHLIKTLVWCDNEWGFANRMLDTTLAMAAVDFRLDASASTKL.

NAD(+) is bound by residues 12–13 (RI) and Arg-81. Substrate contacts are provided by residues 154-156 (SCT), Arg-200, 213-214 (TK), and Arg-236. Cys-155 serves as the catalytic Nucleophile. Residue Asn-318 coordinates NAD(+).

The protein belongs to the glyceraldehyde-3-phosphate dehydrogenase family. Epd subfamily. In terms of assembly, homotetramer.

Its subcellular location is the cytoplasm. The catalysed reaction is D-erythrose 4-phosphate + NAD(+) + H2O = 4-phospho-D-erythronate + NADH + 2 H(+). It functions in the pathway cofactor biosynthesis; pyridoxine 5'-phosphate biosynthesis; pyridoxine 5'-phosphate from D-erythrose 4-phosphate: step 1/5. Functionally, catalyzes the NAD-dependent conversion of D-erythrose 4-phosphate to 4-phosphoerythronate. The chain is D-erythrose-4-phosphate dehydrogenase from Salmonella paratyphi A (strain ATCC 9150 / SARB42).